The primary structure comprises 242 residues: Invasion chromosome antigen R (242 aa).

It localises to the secreted. Functionally, may contribute to pathogenesis, although some of its characteristics suggest it is a fossil gene. In Shigella flexneri serotype 5a (strain M90T), this protein is Invasion chromosome antigen R.